We begin with the raw amino-acid sequence, 241 residues long: Probable septum site-determining protein MinC (241 aa).

The segment at 109 to 135 (PSGARERKVDPSSKTPAKPAEPTYRPT) is disordered.

Belongs to the MinC family. Interacts with MinD and FtsZ.

Functionally, cell division inhibitor that blocks the formation of polar Z ring septums. Rapidly oscillates between the poles of the cell to destabilize FtsZ filaments that have formed before they mature into polar Z rings. Prevents FtsZ polymerization. The protein is Probable septum site-determining protein MinC of Stutzerimonas stutzeri (strain A1501) (Pseudomonas stutzeri).